The following is an 820-amino-acid chain: Serine/threonine-protein phosphatase 4 regulatory subunit 3-B (820 aa).

The 100-residue stretch at 1–100 folds into the WH1 domain; the sequence is MSDTRRRVKV…DEIWEKICQV (100 aa). A compositionally biased stretch (acidic residues) spans 682-694; sequence ELWFNEDDEEEGE. 2 disordered regions span residues 682 to 711 and 750 to 820; these read ELWFNEDDEEEGEAVVPPVEKTKPEDDFPE and AANG…RLGS. Basic and acidic residues predominate over residues 701–711; sequence EKTKPEDDFPE. Polar residues-rich tracts occupy residues 750-761 and 768-790; these read AANGANSTNSKS and PATSNGSSSKNTSLTTTVASTKG. The segment covering 798–809 has biased composition (acidic residues); the sequence is YPDDEDEEEEED.

The protein belongs to the SMEK family. Serine/threonine-protein phosphatase 4 (PP4) occurs in different assemblies of the catalytic and one or more regulatory subunits.

Functionally, regulatory subunit of serine/threonine-protein phosphatase 4 (PP4). The sequence is that of Serine/threonine-protein phosphatase 4 regulatory subunit 3-B from Xenopus laevis (African clawed frog).